We begin with the raw amino-acid sequence, 347 residues long: MNPLAQPIIYSTIFTGTLITALSSHWFFTWVGLEMNMLAFIPILTKKMSPRSTEAATKYFLTQATASMILLMAILSNSMLSGQWTMTNTTNQYPSLMIMMAMAMKLGMAPFHFWVPEVTQGTPLMSGLLLLTWQKLAPISIMYQISSSLNVNLLLTLSILSIMAGSWGGLNQTQLRKILAYSSITHMGWMMAVLPYNPNMTILNLTIYIILTTTAFLLLNLNSSTTTLLLSRTWNKLTWLTPLIPSTLLSLGGLPPLTGFLPKWVIIEEFTKNNSLIIPTIMAIITLLNLYFYLRLIYSTSITLLPMSNNVKMKWQFEHTKPTPFLPTLITLTTLLLPISPFMLMIL.

10 consecutive transmembrane segments (helical) span residues I13–L33, F60–L80, L96–P116, P123–Y143, L149–G169, I178–P198, T201–L221, T247–I267, N274–L294, and L326–I346.

It belongs to the complex I subunit 2 family. Core subunit of respiratory chain NADH dehydrogenase (Complex I) which is composed of 45 different subunits. Interacts with TMEM242.

The protein resides in the mitochondrion inner membrane. It carries out the reaction a ubiquinone + NADH + 5 H(+)(in) = a ubiquinol + NAD(+) + 4 H(+)(out). In terms of biological role, core subunit of the mitochondrial membrane respiratory chain NADH dehydrogenase (Complex I) which catalyzes electron transfer from NADH through the respiratory chain, using ubiquinone as an electron acceptor. Essential for the catalytic activity and assembly of complex I. The protein is NADH-ubiquinone oxidoreductase chain 2 of Pan troglodytes (Chimpanzee).